The primary structure comprises 1644 residues: Kinesin-like protein unc-104 (1644 aa).

The 349-residue stretch at 3–351 (SVKVAVRVRP…LRYADRAKQI (349 aa)) folds into the Kinesin motor domain. 97–104 (GQTGAGKS) contacts ATP. A coiled-coil region spans residues 358–436 (NEDANAKLIR…IAELNETWEE (79 aa)). Residues 499-565 (TRLGTSEANV…LQTGSRVILG (67 aa)) form the FHA domain. Basic and acidic residues predominate over residues 574–591 (HPEQAREKREKPKDKDVG). Residues 574–598 (HPEQAREKREKPKDKDVGENPGGNA) form a disordered region. A coiled-coil region spans residues 631–672 (EQFKREKLAADQEFEEQRKTYEARIDALQKQVEEQSMTMSMY). Disordered stretches follow at residues 953 to 985 (EQED…LQPG) and 1419 to 1440 (HMVI…TLPE). Basic and acidic residues predominate over residues 969–984 (ELHESNEHEPGEHLQP). Over residues 1428–1437 (TPVKDQQTPT) the composition is skewed to polar residues. The PH domain maps to 1542 to 1640 (VVARKGYLNV…WLYAINPLLA (99 aa)).

Belongs to the TRAFAC class myosin-kinesin ATPase superfamily. Kinesin family. Unc-104 subfamily. As to quaternary structure, monomer.

It is found in the cytoplasm. It localises to the cytoskeleton. In terms of biological role, required for presynaptic maturation, has a role in axonal transport of dense-core vesicles carrying synaptic vesicle precursors, components required for the morphological transformation of axonal growth cones to mature boutons. This chain is Kinesin-like protein unc-104, found in Aedes aegypti (Yellowfever mosquito).